Consider the following 130-residue polypeptide: Small ribosomal subunit protein uS8 (130 aa).

The protein belongs to the universal ribosomal protein uS8 family. As to quaternary structure, part of the 30S ribosomal subunit. Contacts proteins S5 and S12.

Functionally, one of the primary rRNA binding proteins, it binds directly to 16S rRNA central domain where it helps coordinate assembly of the platform of the 30S subunit. The polypeptide is Small ribosomal subunit protein uS8 (Buchnera aphidicola subsp. Baizongia pistaciae (strain Bp)).